The primary structure comprises 89 residues: Small ribosomal subunit protein uS15 (89 aa).

This sequence belongs to the universal ribosomal protein uS15 family. As to quaternary structure, part of the 30S ribosomal subunit. Forms a bridge to the 50S subunit in the 70S ribosome, contacting the 23S rRNA.

One of the primary rRNA binding proteins, it binds directly to 16S rRNA where it helps nucleate assembly of the platform of the 30S subunit by binding and bridging several RNA helices of the 16S rRNA. In terms of biological role, forms an intersubunit bridge (bridge B4) with the 23S rRNA of the 50S subunit in the ribosome. The sequence is that of Small ribosomal subunit protein uS15 from Paraburkholderia phymatum (strain DSM 17167 / CIP 108236 / LMG 21445 / STM815) (Burkholderia phymatum).